A 656-amino-acid polypeptide reads, in one-letter code: CoB--CoM heterodisulfide reductase iron-sulfur subunit A 2 (656 aa).

152–175 lines the FAD pocket; the sequence is GGGVSGIQAALDLADMGFEVILVE. 4 consecutive 4Fe-4S ferredoxin-type domains span residues 238-269, 286-315, 577-606, and 610-639; these read KKPR…FDEG, SVFT…FDQE, IVSE…LVEK, and LVAE…QNHF. [4Fe-4S] cluster-binding residues include Cys-248, Cys-251, Cys-254, Cys-258, Cys-295, Cys-298, Cys-301, Cys-305, Cys-586, Cys-589, Cys-592, Cys-596, Cys-619, Cys-622, Cys-625, and Cys-629.

This sequence belongs to the HdrA family. In terms of assembly, the ferredoxin:CoB-CoM heterodisulfide reductase is composed of three subunits; HdrA, HdrB and HdrC. [4Fe-4S] cluster is required as a cofactor. Requires FAD as cofactor.

Its pathway is cofactor metabolism; coenzyme M-coenzyme B heterodisulfide reduction; coenzyme B and coenzyme M from coenzyme M-coenzyme B heterodisulfide: step 1/1. Its function is as follows. Part of a complex that catalyzes the reversible reduction of CoM-S-S-CoB to the thiol-coenzymes H-S-CoM (coenzyme M) and H-S-CoB (coenzyme B). In Methanopyrus kandleri (strain AV19 / DSM 6324 / JCM 9639 / NBRC 100938), this protein is CoB--CoM heterodisulfide reductase iron-sulfur subunit A 2 (hdrA2).